The sequence spans 503 residues: Annexin A11 (503 aa).

Composition is skewed to pro residues over residues 80–117 (GYPP…PGMP) and 123–167 (PGAP…PVPS). The segment at 80-172 (GYPPVPPGGF…QPVPSYPGYS (93 aa)) is disordered. 4 Annexin repeats span residues 198–269 (FDPL…ALMK), 270–341 (TPVL…SLSQ), 353–425 (SLVQ…AVVK), and 429–500 (NTPA…KICG). Residues Lys-246 and Lys-253 each carry the N6-acetyllysine modification. Lys-477 carries the N6-acetyllysine modification.

It belongs to the annexin family. As to quaternary structure, interacts with S100A6. Interacts with PDCD6 in a calcium-dependent manner. Interacts with KIF23 during cytokinesis.

Its subcellular location is the cytoplasm. The protein resides in the melanosome. It localises to the nucleus envelope. It is found in the nucleus. The protein localises to the nucleoplasm. Its subcellular location is the cytoskeleton. The protein resides in the spindle. Functionally, required for midbody formation and completion of the terminal phase of cytokinesis. Binds specifically to calcyclin in a calcium-dependent manner. This is Annexin A11 (Anxa11) from Mus musculus (Mouse).